A 172-amino-acid chain; its full sequence is 3-hydroxydecanoyl-[acyl-carrier-protein] dehydratase (172 aa).

Residue His-70 is part of the active site.

Belongs to the thioester dehydratase family. FabA subfamily. In terms of assembly, homodimer.

The protein resides in the cytoplasm. It catalyses the reaction a (3R)-hydroxyacyl-[ACP] = a (2E)-enoyl-[ACP] + H2O. The catalysed reaction is (3R)-hydroxydecanoyl-[ACP] = (2E)-decenoyl-[ACP] + H2O. It carries out the reaction (2E)-decenoyl-[ACP] = (3Z)-decenoyl-[ACP]. It participates in lipid metabolism; fatty acid biosynthesis. Necessary for the introduction of cis unsaturation into fatty acids. Catalyzes the dehydration of (3R)-3-hydroxydecanoyl-ACP to E-(2)-decenoyl-ACP and then its isomerization to Z-(3)-decenoyl-ACP. Can catalyze the dehydratase reaction for beta-hydroxyacyl-ACPs with saturated chain lengths up to 16:0, being most active on intermediate chain length. This chain is 3-hydroxydecanoyl-[acyl-carrier-protein] dehydratase, found in Xylella fastidiosa (strain M23).